The following is a 156-amino-acid chain: Ribosome maturation factor RimP (156 aa).

Belongs to the RimP family.

It is found in the cytoplasm. Its function is as follows. Required for maturation of 30S ribosomal subunits. This is Ribosome maturation factor RimP from Oenococcus oeni (strain ATCC BAA-331 / PSU-1).